The following is a 124-amino-acid chain: Con-Ins Tx1 (124 aa).

The first 24 residues, 1 to 24 (MTTSSYFLLVALGLLLYVFQSSFG), serve as a signal peptide directing secretion. 4 disulfides stabilise this stretch: cysteine 29/cysteine 107, cysteine 41/cysteine 110, cysteine 53/cysteine 123, and cysteine 109/cysteine 114. Proline 34 carries the post-translational modification 4-hydroxyproline; partial. Positions 59–92 (EQGGANNARANTGRTSSLMKRRGFLSLLKKRGKR) are cleaved as a propeptide — c peptide. 4-carboxyglutamate; partial is present on glutamate 118.

This sequence belongs to the insulin family. In terms of assembly, heterodimer of A and B chains; disulfide-linked. As to expression, expressed by the venom gland.

It is found in the secreted. Its function is as follows. This venom insulin facilitates prey capture by rapidly inducing hypoglycemic shock. Intraperitoneal injection of this peptide into zebrafish lowers blood glucose with the same potency than human insulin. In vivo, when applied to water, this peptide reduces overall locomotor activity of zebrafish larvae, observed as a significant decrease in the percentage of time spent swimming and movement frequency. This is Con-Ins Tx1 from Conus textile (Cloth-of-gold cone).